Reading from the N-terminus, the 85-residue chain is uncharacterized protein (85 aa).

Helical transmembrane passes span 16-34 (WALSLSILYVIGWCLCAYL) and 50-71 (LSCIYLPILFIVIGHWIIKIIF).

It to E.coli YhdT.

The protein resides in the cell membrane. This is an uncharacterized protein from Haemophilus influenzae (strain ATCC 51907 / DSM 11121 / KW20 / Rd).